The primary structure comprises 348 residues: Dihydroorotase (348 aa).

Positions 13 and 15 each coordinate Zn(2+). Substrate-binding positions include 15–17 and N41; that span reads HLR. Zn(2+)-binding residues include K99, H136, and H174. K99 is subject to N6-carboxylysine. Substrate is bound at residue H136. L219 is a binding site for substrate. D247 lines the Zn(2+) pocket. D247 is a catalytic residue. The substrate site is built by H251 and A263.

The protein belongs to the metallo-dependent hydrolases superfamily. DHOase family. Class II DHOase subfamily. As to quaternary structure, homodimer. Zn(2+) is required as a cofactor.

The catalysed reaction is (S)-dihydroorotate + H2O = N-carbamoyl-L-aspartate + H(+). Its pathway is pyrimidine metabolism; UMP biosynthesis via de novo pathway; (S)-dihydroorotate from bicarbonate: step 3/3. Catalyzes the reversible cyclization of carbamoyl aspartate to dihydroorotate. This is Dihydroorotase from Rhizobium etli (strain ATCC 51251 / DSM 11541 / JCM 21823 / NBRC 15573 / CFN 42).